The primary structure comprises 580 residues: Glyco-Gag protein (580 aa).

At 1 to 51 (MSGASSGTAIGAHLFGVSPEYRVLIGDGGAGPSKSLSEVSFSVWYRSRAAR) the chain is on the cytoplasmic side. The chain crosses the membrane as a helical span at residues 52–72 (LVILCLVASFLVPCLTFLIAE). Over 73 to 580 (AVMGQTVTTP…ANSTLLNLED (508 aa)) the chain is Extracellular. Asn134 carries N-linked (GlcNAc...) asparagine; by host glycosylation. Disordered stretches follow at residues 171–282 (VRPF…NRPQ), 491–514 (ETPE…RHKE), and 560–580 (RDCP…NLED). Over residues 174 to 193 (FLPPPKPPTPLPQPLSPQPS) the composition is skewed to pro residues. A compositionally biased stretch (low complexity) spans 194–203 (APLTSSLYPV). 2 stretches are compositionally biased toward pro residues: residues 204-220 (VPKP…PDPS) and 230-245 (EPPP…PSGP). The segment covering 491-508 (ETPEEREERLWQRQEERD) has biased composition (basic and acidic residues). Over residues 571 to 580 (ANSTLLNLED) the composition is skewed to polar residues. Asn572 is a glycosylation site (N-linked (GlcNAc...) asparagine; by host).

Post-translationally, glycosylated by host. In terms of processing, cleaved by host near the middle of the molecule, releasing the c-terminal half containing capsid and nucleoprotein domains op GAG.

The protein localises to the host cell membrane. Its function is as follows. Plays a role in viral particle release. Presumably acts by facilitating the fission of the virion bud at the cell surface. The protein is Glyco-Gag protein of Feline leukemia virus.